The primary structure comprises 305 residues: Suppressor of activated egl-4 protein 2 (305 aa).

Positions 138 to 168 are disordered; that stretch reads KRGYESDSSDVSGVSHCSDAKRRRGRPRKDE. Residues 158 to 170 constitute a DNA-binding region (a.T hook); the sequence is KRRRGRPRKDEEA.

In terms of assembly, interacts with phosphorylated egl-4. May interact with itself. May be a component of a histone deacetylase complex containing saeg-2, saeg-1 and hda-2. Ubiquitously expressed.

The protein localises to the nucleus. In terms of biological role, as a likely component of a histone deacetylase complex, together with saeg-1 and hda-2, functions downstream of the cAMP-dependent kinase egl-4 to regulate the expression of genes required for egg-laying and foraging. This is Suppressor of activated egl-4 protein 2 from Caenorhabditis elegans.